Consider the following 150-residue polypeptide: Natriuretic peptides A (150 aa).

Residues 1–24 (MSSFTITVSFLLVLVFQFPGQTRA) form the signal peptide. 2 propeptides span residues 25–122 (NPVY…AAPR) and 92–102 (DGGALGRGPWD). The disordered stretch occupies residues 77–100 (LEVPPWTGEVNPAQRDGGALGRGP). At S128 the chain carries Phosphoserine. Residues C129 and C145 are joined by a disulfide bond.

The protein belongs to the natriuretic peptide family. As to quaternary structure, homodimer; disulfide-linked antiparallel dimer. Post-translationally, the precursor molecule is proteolytically cleaved by CORIN at Arg-122 to produce the atrial natriuretic peptide. Undergoes further proteolytic cleavage by unknown proteases to give rise to long-acting natriuretic peptide, vessel dilator and kaliuretic peptide. Additional processing gives rise to the auriculin and atriopeptin peptides. In the kidneys, alternative processing by an unknown protease results in the peptide urodilatin. In terms of processing, cleavage by MME initiates degradation of the factor and thereby regulates its activity. Degradation by IDE results in reduced activation of NPR1 (in vitro). During IDE degradation, the resulting products can temporarily stimulate NPR2 to produce cGMP, before the fragments are completely degraded and inactivated by IDE (in vitro). Degraded by IDE. Post-translationally, phosphorylation on Ser-128 decreases vasorelaxant activity. In terms of tissue distribution, brain (at protein level).

It is found in the secreted. The protein localises to the perikaryon. The protein resides in the cell projection. In terms of biological role, hormone that plays a key role in mediating cardio-renal homeostasis, and is involved in vascular remodeling and regulating energy metabolism. Acts by specifically binding and stimulating NPR1 to produce cGMP, which in turn activates effector proteins, such as PRKG1, that drive various biological responses. Regulates vasodilation, natriuresis, diuresis and aldosterone synthesis and is therefore essential for regulating blood pressure, controlling the extracellular fluid volume and maintaining the fluid-electrolyte balance. Also involved in inhibiting cardiac remodeling and cardiac hypertrophy by inducing cardiomyocyte apoptosis and attenuating the growth of cardiomyocytes and fibroblasts. Plays a role in female pregnancy by promoting trophoblast invasion and spiral artery remodeling in uterus, and thus prevents pregnancy-induced hypertension. In adipose tissue, acts in various cGMP- and PKG-dependent pathways to regulate lipid metabolism and energy homeostasis. This includes up-regulating lipid metabolism and mitochondrial oxygen utilization by activating the AMP-activated protein kinase (AMPK), and increasing energy expenditure by acting via MAPK11 to promote the UCP1-dependent thermogenesis of brown adipose tissue. Binds the clearance receptor NPR3 which removes the hormone from circulation. May have a role in cardio-renal homeostasis through regulation of natriuresis, diuresis, vasodilation, and inhibiting aldosterone synthesis. In vitro, promotes the production of cGMP and induces vasodilation. May promote natriuresis, at least in part, by enhancing prostaglandin E2 synthesis resulting in the inhibition of renal Na+-K+-ATPase. However reports on the involvement of this peptide in mammal blood volume and blood pressure homeostasis are conflicting; according to a report, in vivo it is not sufficient to activate cGMP and does not inhibit collecting duct transport nor effect diuresis and natriuresis. Appears to bind to specific receptors that are distinct from the receptors bound by atrial natriuretic peptide and vessel dilator. Possibly enhances protein excretion in urine by decreasing proximal tubular protein reabsorption. Its function is as follows. May have a role in cardio-renal homeostasis through regulation of natriuresis, diuresis, and vasodilation. In vitro, promotes the production of cGMP and induces vasodilation. May promote natriuresis, at least in part, by enhancing prostaglandin E2 synthesis resulting in the inhibition of renal Na+-K+-ATPase. However reports on the involvement of this peptide in mammal blood volume and blood pressure homeostasis are conflicting; according to a report it is not sufficient to activate cGMP and does not inhibit collecting duct transport nor effect diuresis and natriuresis. Appears to bind to specific receptors that are distinct from the receptors bound by the atrial natriuretic and long-acting natriuretic peptides. Possibly functions in protein excretion in urine by maintaining the integrity of the proximal tubules and enhancing protein excretion by decreasing proximal tubular protein reabsorption. Functionally, may have a role in cardio-renal homeostasis through regulation of diuresis and inhibiting aldosterone synthesis. In vitro, promotes the production of cGMP and induces vasodilation. May promote natriuresis, at least in part, by enhancing prostaglandin E2 synthesis resulting in the inhibition of renal Na+-K+-ATPase. May have a role in potassium excretion but not sodium excretion (natriuresis). Possibly enhances protein excretion in urine by decreasing proximal tubular protein reabsorption. In terms of biological role, hormone produced in the kidneys that appears to be important for maintaining cardio-renal homeostasis. Mediates vasodilation, natriuresis and diuresis primarily in the renal system, in order to maintain the extracellular fluid volume and control the fluid-electrolyte balance. Specifically binds and stimulates cGMP production by renal transmembrane receptors, likely NPR1. Urodilatin not ANP, may be the natriuretic peptide responsible for the regulation of sodium and water homeostasis in the kidney. May have a role in cardio-renal homeostasis through regulation of natriuresis and vasodilation. In vivo promotes natriuresis and in vitro, vasodilates renal artery strips. Its function is as follows. May have a role in cardio-renal homeostasis through regulation of regulation of natriuresis and vasodilation. In vivo promotes natriuresis. In vitro, vasodilates intestinal smooth muscle but not smooth muscle strips. Functionally, may have a role in cardio-renal homeostasis through regulation of natriuresis and vasodilation. In vivo promotes natriuresis. In vitro, selectively vasodilates intestinal and vascular smooth muscle strips. In terms of biological role, may have a role in cardio-renal homeostasis through regulation of natriuresis and vasodilation. In vivo promotes natriuresis. In vitro, selectively vasodilates intestinal smooth muscle but not vascular smooth muscle strips. This chain is Natriuretic peptides A (NPPA), found in Sus scrofa (Pig).